Here is a 440-residue protein sequence, read N- to C-terminus: Enolase (440 aa).

Q163 serves as a coordination point for (2R)-2-phosphoglycerate. The active-site Proton donor is E205. Mg(2+) is bound by residues D242, E288, and D315. Residues K340, R369, S370, and K391 each contribute to the (2R)-2-phosphoglycerate site. The active-site Proton acceptor is the K340.

It belongs to the enolase family. Mg(2+) serves as cofactor.

The protein localises to the cytoplasm. It localises to the secreted. Its subcellular location is the cell surface. It catalyses the reaction (2R)-2-phosphoglycerate = phosphoenolpyruvate + H2O. Its pathway is carbohydrate degradation; glycolysis; pyruvate from D-glyceraldehyde 3-phosphate: step 4/5. Catalyzes the reversible conversion of 2-phosphoglycerate (2-PG) into phosphoenolpyruvate (PEP). It is essential for the degradation of carbohydrates via glycolysis. The chain is Enolase from Pediococcus pentosaceus (strain ATCC 25745 / CCUG 21536 / LMG 10740 / 183-1w).